Reading from the N-terminus, the 174-residue chain is MTYVLFLLSVGLVMGFVGFSSKPSPIYGGLVLIVSGVVGCAIILNCGGGYMGLMVFLIYLGGMMVVFGYTTAMAIGEYPEAWGSGVEVLVSVLVGLAMEVGLVLWVKEYDGVVVVVNFNNVGSWMIYEGEGSGLIREDPIGAGALYDYGRWLVVVTGWTLFVGVYIVIEIARGN.

The next 5 membrane-spanning stretches (helical) occupy residues 1–21, 24–44, 47–67, 86–106, and 151–171; these read MTYV…GFSS, SPIY…AIIL, GGGY…MVVF, VEVL…VLWV, and WLVV…IEIA.

Belongs to the complex I subunit 6 family. In terms of assembly, core subunit of respiratory chain NADH dehydrogenase (Complex I) which is composed of 45 different subunits.

It localises to the mitochondrion inner membrane. The catalysed reaction is a ubiquinone + NADH + 5 H(+)(in) = a ubiquinol + NAD(+) + 4 H(+)(out). Its function is as follows. Core subunit of the mitochondrial membrane respiratory chain NADH dehydrogenase (Complex I) which catalyzes electron transfer from NADH through the respiratory chain, using ubiquinone as an electron acceptor. Essential for the catalytic activity and assembly of complex I. In Gorilla gorilla gorilla (Western lowland gorilla), this protein is NADH-ubiquinone oxidoreductase chain 6 (MT-ND6).